A 534-amino-acid polypeptide reads, in one-letter code: NAD(P)H-quinone oxidoreductase chain 4 (534 aa).

Helical transmembrane passes span 12–32 (FPWLSASILFPIGSALVIPFF), 44–64 (FALSIALITFLITVGSYINGF), 96–116 (MPLILLTSFITALAVLAAWPV), 120–140 (PKLFFFLILVMDGGQIAVFAV), 144–164 (LLFFLTWELELIPVYLLLAIW), 176–196 (FIIYTAGSSIFILLAALAMGF), 220–240 (ILCYVGLLIAFGVKLPIVPLH), 251–271 (TAPVHMLLAGILLKMGGYALL), 285–305 (FAPLLIVLGVVNIIYAALTSF), 314–334 (IAYSSISHMGFVLIGIGSFSS), 340–360 (AMLQMVSHGLIGASLFFLVGA), 384–404 (FALWTACSLASLALPGMSGFV), 425–445 (VVMASLAAIGVILTPIYLLSM), and 472–492 (VYIIACLLLPIIGIGLYPRLV).

The protein belongs to the complex I subunit 4 family.

It localises to the cellular thylakoid membrane. It catalyses the reaction a plastoquinone + NADH + (n+1) H(+)(in) = a plastoquinol + NAD(+) + n H(+)(out). The catalysed reaction is a plastoquinone + NADPH + (n+1) H(+)(in) = a plastoquinol + NADP(+) + n H(+)(out). Functionally, NDH-1 shuttles electrons from NAD(P)H, via FMN and iron-sulfur (Fe-S) centers, to quinones in the respiratory chain. The immediate electron acceptor for the enzyme in this species is believed to be plastoquinone. Couples the redox reaction to proton translocation (for every two electrons transferred, four hydrogen ions are translocated across the cytoplasmic membrane), and thus conserves the redox energy in a proton gradient. This chain is NAD(P)H-quinone oxidoreductase chain 4, found in Prochlorococcus marinus (strain MIT 9215).